The chain runs to 133 residues: Large ribosomal subunit protein uL16 (133 aa).

This sequence belongs to the universal ribosomal protein uL16 family. Part of the 50S ribosomal subunit.

Binds 23S rRNA and is also seen to make contacts with the A and possibly P site tRNAs. This Blochmanniella floridana protein is Large ribosomal subunit protein uL16.